The chain runs to 173 residues: Alpha-crystallin A chain (173 aa).

M1 carries the post-translational modification N-acetylmethionine. The sHSP domain occupies 52–162 (LFRGFMDSGI…SHSERPIPVS (111 aa)). Zn(2+) is bound by residues H100, E102, H107, and H154. The interval 146–173 (MMSGLDSSHSERPIPVSREEKPTSAPSS) is disordered. Residues 153–167 (SHSERPIPVSREEKP) are compositionally biased toward basic and acidic residues.

Belongs to the small heat shock protein (HSP20) family. As to quaternary structure, heteropolymer composed of three CRYAA and one CRYAB subunits. Inter-subunit bridging via zinc ions enhances stability, which is crucial as there is no protein turn over in the lens. Can also form homodimers and homotetramers (dimers of dimers) which serve as the building blocks of homooligomers. Within homooligomers, the zinc-binding motif is created from residues of 3 different molecules. His-100 and Glu-102 from one molecule are ligands of the zinc ion, and His-107 and His-154 residues from additional molecules complete the site with tetrahedral coordination geometry.

It is found in the cytoplasm. Its subcellular location is the nucleus. In terms of biological role, contributes to the transparency and refractive index of the lens. May act as a chaperone, preventing aggregation of various proteins under a wide range of stress conditions. The protein is Alpha-crystallin A chain (CRYAA) of Aquarana catesbeiana (American bullfrog).